Consider the following 152-residue polypeptide: Protein Smg homolog (152 aa).

It belongs to the Smg family.

The protein is Protein Smg homolog of Nitrosomonas eutropha (strain DSM 101675 / C91 / Nm57).